Reading from the N-terminus, the 304-residue chain is E3 ubiquitin-protein ligase BOI (304 aa).

A WRD domain region spans residues 178–214; the sequence is LQERVKSLYVENQIWRDIAQTNEANANTLRTNLDQVL. Residues 197-220 adopt a coiled-coil conformation; that stretch reads QTNEANANTLRTNLDQVLAQLETF. Residues 254–291 form an RING-type zinc finger; it reads CKRCGEREASVLVLPCRHLCLCTVCGGSALLRTCPVCD.

Interacts with MYB108/BOS1 and the DELLA proteins GAI, RGA, RGL1, RGL2 and RGL3. As to expression, expressed in leaves, siliques, roots, flowering tissues and stigma tips.

The protein resides in the nucleus. The enzyme catalyses S-ubiquitinyl-[E2 ubiquitin-conjugating enzyme]-L-cysteine + [acceptor protein]-L-lysine = [E2 ubiquitin-conjugating enzyme]-L-cysteine + N(6)-ubiquitinyl-[acceptor protein]-L-lysine.. Its pathway is protein degradation; proteasomal ubiquitin-dependent pathway. E3 ubiquitin-protein ligase involved in the regulation of pathogen and abiotic stress responses by facilitating degradation of MYB108/BOI. Attenuates cell death by preventing caspase activation. Has no effect on the stability of the DELLA proteins. Not regulated by MYB108/BOI. The polypeptide is E3 ubiquitin-protein ligase BOI (BOI) (Arabidopsis thaliana (Mouse-ear cress)).